A 185-amino-acid polypeptide reads, in one-letter code: Ribosome-recycling factor (185 aa).

This sequence belongs to the RRF family.

Its subcellular location is the cytoplasm. Its function is as follows. Responsible for the release of ribosomes from messenger RNA at the termination of protein biosynthesis. May increase the efficiency of translation by recycling ribosomes from one round of translation to another. This Aeromonas hydrophila subsp. hydrophila (strain ATCC 7966 / DSM 30187 / BCRC 13018 / CCUG 14551 / JCM 1027 / KCTC 2358 / NCIMB 9240 / NCTC 8049) protein is Ribosome-recycling factor.